Reading from the N-terminus, the 248-residue chain is 3-deoxy-manno-octulosonate cytidylyltransferase (248 aa).

Belongs to the KdsB family.

The protein resides in the cytoplasm. The catalysed reaction is 3-deoxy-alpha-D-manno-oct-2-ulosonate + CTP = CMP-3-deoxy-beta-D-manno-octulosonate + diphosphate. Its pathway is nucleotide-sugar biosynthesis; CMP-3-deoxy-D-manno-octulosonate biosynthesis; CMP-3-deoxy-D-manno-octulosonate from 3-deoxy-D-manno-octulosonate and CTP: step 1/1. The protein operates within bacterial outer membrane biogenesis; lipopolysaccharide biosynthesis. Activates KDO (a required 8-carbon sugar) for incorporation into bacterial lipopolysaccharide in Gram-negative bacteria. The sequence is that of 3-deoxy-manno-octulosonate cytidylyltransferase from Desulfosudis oleivorans (strain DSM 6200 / JCM 39069 / Hxd3) (Desulfococcus oleovorans).